The sequence spans 628 residues: Siderophore iron transporter 1 (628 aa).

Helical transmembrane passes span I68–G88, L107–A127, I132–I152, V164–A184, L194–V214, G225–L245, I285–A305, I317–I337, G354–D374, I394–I414, K420–Y440, S448–T468, L488–W508, and K559–L579.

This sequence belongs to the major facilitator superfamily.

The protein localises to the endosome membrane. Functionally, involved in the transport of siderophore ferrioxamine B and so has a role in iron homeostasis. The sequence is that of Siderophore iron transporter 1 (SIT1) from Saccharomyces cerevisiae (strain ATCC 204508 / S288c) (Baker's yeast).